The sequence spans 152 residues: Cytochrome c oxidase subunit 5A, mitochondrial (152 aa).

The N-terminal 43 residues, 1-43, are a transit peptide targeting the mitochondrion; sequence MLGTALRRCAVAAAAASRAGPRGLLHPAPAPGPAAAIQSIRCY. The SIFI-degron motif lies at 2 to 22; sequence LGTALRRCAVAAAAASRAGPR. 2 positions are modified to N6-acetyllysine: Lys89 and Lys115. Phosphothreonine is present on Thr143.

It belongs to the cytochrome c oxidase subunit 5A family. Component of the cytochrome c oxidase (complex IV, CIV), a multisubunit enzyme composed of 14 subunits. The complex is composed of a catalytic core of 3 subunits MT-CO1, MT-CO2 and MT-CO3, encoded in the mitochondrial DNA, and 11 supernumerary subunits COX4I, COX5A, COX5B, COX6A, COX6B, COX6C, COX7A, COX7B, COX7C, COX8 and NDUFA4, which are encoded in the nuclear genome. The complex exists as a monomer or a dimer and forms supercomplexes (SCs) in the inner mitochondrial membrane with NADH-ubiquinone oxidoreductase (complex I, CI) and ubiquinol-cytochrome c oxidoreductase (cytochrome b-c1 complex, complex III, CIII), resulting in different assemblies (supercomplex SCI(1)III(2)IV(1) and megacomplex MCI(2)III(2)IV(2)). Interacts with AFG1L. Interacts with RAB5IF. In terms of processing, in response to mitochondrial stress, the precursor protein is ubiquitinated by the SIFI complex in the cytoplasm before mitochondrial import, leading to its degradation. Within the SIFI complex, UBR4 initiates ubiquitin chain that are further elongated or branched by KCMF1.

The protein localises to the mitochondrion inner membrane. The protein operates within energy metabolism; oxidative phosphorylation. Its function is as follows. Component of the cytochrome c oxidase, the last enzyme in the mitochondrial electron transport chain which drives oxidative phosphorylation. The respiratory chain contains 3 multisubunit complexes succinate dehydrogenase (complex II, CII), ubiquinol-cytochrome c oxidoreductase (cytochrome b-c1 complex, complex III, CIII) and cytochrome c oxidase (complex IV, CIV), that cooperate to transfer electrons derived from NADH and succinate to molecular oxygen, creating an electrochemical gradient over the inner membrane that drives transmembrane transport and the ATP synthase. Cytochrome c oxidase is the component of the respiratory chain that catalyzes the reduction of oxygen to water. Electrons originating from reduced cytochrome c in the intermembrane space (IMS) are transferred via the dinuclear copper A center (CU(A)) of subunit 2 and heme A of subunit 1 to the active site in subunit 1, a binuclear center (BNC) formed by heme A3 and copper B (CU(B)). The BNC reduces molecular oxygen to 2 water molecules using 4 electrons from cytochrome c in the IMS and 4 protons from the mitochondrial matrix. The protein is Cytochrome c oxidase subunit 5A, mitochondrial (COX5A) of Eulemur fulvus fulvus (Brown lemur).